A 252-amino-acid chain; its full sequence is Putative cytosolic acyl coenzyme A thioester hydrolase-like (252 aa).

HotDog ACOT-type domains lie at 1–90 (MIKE…LSLT) and 146–252 (SYSQ…SVFT).

As to quaternary structure, homodimer. In terms of tissue distribution, expressed in all tissues examined. Up-regulated in nasopharyngeal carcinoma (at protein level).

The protein localises to the cytoplasm. The catalysed reaction is hexadecanoyl-CoA + H2O = hexadecanoate + CoA + H(+). Acyl-CoA thioesterases are a group of enzymes that catalyze the hydrolysis of acyl-CoAs to the free fatty acid and coenzyme A (CoASH), providing the potential to regulate intracellular levels of acyl-CoAs, free fatty acids and CoASH. This Homo sapiens (Human) protein is Putative cytosolic acyl coenzyme A thioester hydrolase-like (ACOT7L).